We begin with the raw amino-acid sequence, 327 residues long: Phospho-N-acetylmuramoyl-pentapeptide-transferase (327 aa).

10 helical membrane-spanning segments follow: residues 3 to 23 (IALI…PAFI), 51 to 71 (TMGG…IGLF), 75 to 95 (LSNG…VGFL), 115 to 135 (LFLQ…HGAG), 140 to 160 (IFTV…FWLI), 172 to 192 (IDGL…VIAV), 197 to 217 (FDIL…FVFN), 223 to 243 (IFMG…ISIS), 248 to 268 (WTLL…MMQV), and 306 to 326 (VDFF…AILY).

It belongs to the glycosyltransferase 4 family. MraY subfamily. Mg(2+) serves as cofactor.

Its subcellular location is the cell membrane. It carries out the reaction UDP-N-acetyl-alpha-D-muramoyl-L-alanyl-gamma-D-glutamyl-L-lysyl-D-alanyl-D-alanine + di-trans,octa-cis-undecaprenyl phosphate = Mur2Ac(oyl-L-Ala-gamma-D-Glu-L-Lys-D-Ala-D-Ala)-di-trans,octa-cis-undecaprenyl diphosphate + UMP. The protein operates within cell wall biogenesis; peptidoglycan biosynthesis. Catalyzes the initial step of the lipid cycle reactions in the biosynthesis of the cell wall peptidoglycan: transfers peptidoglycan precursor phospho-MurNAc-pentapeptide from UDP-MurNAc-pentapeptide onto the lipid carrier undecaprenyl phosphate, yielding undecaprenyl-pyrophosphoryl-MurNAc-pentapeptide, known as lipid I. The chain is Phospho-N-acetylmuramoyl-pentapeptide-transferase from Streptococcus sanguinis (strain SK36).